Consider the following 162-residue polypeptide: MLNQLENLTERVGGSNKLVDRWLDVRKHLLVAYYNLVGIKPGKESYMRLNEKALDDFCQSLVDYLSAGHFSIYERILHKLEGNGQLLHAAKIWPLLEDNTQRIMDYYDTSLETAIDHDNCLEFQQALSDIGEALEARFVLEDKLIMLVFDAMHDGARVKRPA.

Belongs to the Rsd/AlgQ family. In terms of assembly, interacts with RpoD.

The protein localises to the cytoplasm. Functionally, binds RpoD and negatively regulates RpoD-mediated transcription activation by preventing the interaction between the primary sigma factor RpoD with the catalytic core of the RNA polymerase and with promoter DNA. May be involved in replacement of the RNA polymerase sigma subunit from RpoD to RpoS during the transition from exponential growth to the stationary phase. The polypeptide is Regulator of sigma D (Salmonella agona (strain SL483)).